The sequence spans 248 residues: 5'-nucleotidase SurE (248 aa).

Asp8, Asp9, Ser39, and Asn91 together coordinate a divalent metal cation.

The protein belongs to the SurE nucleotidase family. The cofactor is a divalent metal cation.

The protein resides in the cytoplasm. The enzyme catalyses a ribonucleoside 5'-phosphate + H2O = a ribonucleoside + phosphate. Its function is as follows. Nucleotidase that shows phosphatase activity on nucleoside 5'-monophosphates. The chain is 5'-nucleotidase SurE from Pseudoalteromonas atlantica (strain T6c / ATCC BAA-1087).